Consider the following 116-residue polypeptide: uncharacterized protein (116 aa).

Residues 64–116 (RRFYSGTVNRNARSAGAASRSTSSVKRPLESKKRNARPETEKWCASYSAGNRR) are disordered. Over residues 73 to 87 (RNARSAGAASRSTSS) the composition is skewed to low complexity. Positions 90–105 (RPLESKKRNARPETEK) are enriched in basic and acidic residues.

This is an uncharacterized protein from Saccharomyces cerevisiae (strain ATCC 204508 / S288c) (Baker's yeast).